An 862-amino-acid polypeptide reads, in one-letter code: Pentatricopeptide repeat-containing protein At1g74850, chloroplastic (862 aa).

A chloroplast-targeting transit peptide spans 1–66 (MNLAIPNPNS…DLVLGNPSVS (66 aa)). PPR repeat units follow at residues 104–139 (SLND…WCKP), 140–174 (NEHI…GVSR), 175–209 (SVFS…KISP), 210–245 (SILT…GIQP), 246–280 (DIVT…GIVP), 281–315 (DLTT…GSLP), 316–350 (DITS…GCTP), 351–385 (NANT…NTDP), 386–420 (DAAT…NIEP), 421–455 (DMET…DIVP), 456–490 (SSKA…GSNP), 491–525 (SIET…GIPR), 526–560 (NRDT…RCDP), 561–595 (DERT…DILP), and 596–630 (SIMC…RVSN). The 89-residue stretch at 713–801 (VDVHRMSEGG…RIMCQRSQLK (89 aa)) folds into the Smr domain. The segment at 831-862 (GTRASTSSDTNHSGNPTQRRTRTKKELAGSTA) is disordered. The segment covering 833–848 (RASTSSDTNHSGNPTQ) has biased composition (polar residues).

The protein belongs to the PPR family. P subfamily. Mostly expressed in leaves, stems and flowers, but barely in roots.

The protein localises to the plastid. It localises to the chloroplast. In terms of biological role, involved in plastid gene expression. The chain is Pentatricopeptide repeat-containing protein At1g74850, chloroplastic (PTAC2) from Arabidopsis thaliana (Mouse-ear cress).